The sequence spans 63 residues: Large ribosomal subunit protein uL29 (63 aa).

Belongs to the universal ribosomal protein uL29 family.

The protein is Large ribosomal subunit protein uL29 of Caulobacter vibrioides (strain ATCC 19089 / CIP 103742 / CB 15) (Caulobacter crescentus).